We begin with the raw amino-acid sequence, 147 residues long: Ribonuclease 4 (147 aa).

The N-terminal stretch at 1–28 (MALQRTHSLLLLLLLTLLGLGLVQPSYG) is a signal peptide. Gln-29 carries the post-translational modification Pyrrolidone carboxylic acid. DUMP is bound by residues Arg-35, His-40, Lys-68, Asn-71, and Thr-72. Residue His-40 is the Proton acceptor of the active site. 4 cysteine pairs are disulfide-bonded: Cys-53/Cys-109, Cys-67/Cys-120, Cys-85/Cys-135, and Cys-92/Cys-99. The active-site Proton donor is His-144. Phe-145 lines the dUMP pocket.

Belongs to the pancreatic ribonuclease family.

It is found in the secreted. Functionally, cleaves preferentially after uridine bases. Has antimicrobial activity against uropathogenic E.coli (UPEC). Probably contributes to urinary tract sterility. This Pongo abelii (Sumatran orangutan) protein is Ribonuclease 4 (RNASE4).